The following is a 354-amino-acid chain: Zinc finger protein 346 (354 aa).

4 Matrin-type zinc fingers span residues T34 to R64, K95 to L125, K165 to K195, and F232 to S262. Zn(2+)-binding residues include C36, C39, H52, H58, C97, C100, H113, and H119. The disordered stretch occupies residues M263–G343. Low complexity-rich tracts occupy residues G270–A289 and G310–L323. Positions M324–S333 are enriched in pro residues.

Its subcellular location is the nucleus. It localises to the cytoplasm. Functionally, binds preferentially to dsRNA, but also to RNA-DNA hybrids. This is Zinc finger protein 346 from Xenopus tropicalis (Western clawed frog).